We begin with the raw amino-acid sequence, 483 residues long: Glutamyl-tRNA(Gln) amidotransferase subunit A (483 aa).

Residues Lys76 and Ser151 each act as charge relay system in the active site. Residue Ser175 is the Acyl-ester intermediate of the active site.

It belongs to the amidase family. GatA subfamily. Heterotrimer of A, B and C subunits.

The enzyme catalyses L-glutamyl-tRNA(Gln) + L-glutamine + ATP + H2O = L-glutaminyl-tRNA(Gln) + L-glutamate + ADP + phosphate + H(+). In terms of biological role, allows the formation of correctly charged Gln-tRNA(Gln) through the transamidation of misacylated Glu-tRNA(Gln) in organisms which lack glutaminyl-tRNA synthetase. The reaction takes place in the presence of glutamine and ATP through an activated gamma-phospho-Glu-tRNA(Gln). The sequence is that of Glutamyl-tRNA(Gln) amidotransferase subunit A from Pseudomonas syringae pv. syringae (strain B728a).